A 276-amino-acid polypeptide reads, in one-letter code: Large ribosomal subunit protein uL2 (276 aa).

Disordered regions lie at residues 34–55 and 221–276; these read LQPL…RHQG and RGSV…RRTK. A compositionally biased stretch (polar residues) spans 37-48; that stretch reads LKNNAGRNNNGR.

It belongs to the universal ribosomal protein uL2 family. As to quaternary structure, part of the 50S ribosomal subunit. Forms a bridge to the 30S subunit in the 70S ribosome.

Its function is as follows. One of the primary rRNA binding proteins. Required for association of the 30S and 50S subunits to form the 70S ribosome, for tRNA binding and peptide bond formation. It has been suggested to have peptidyltransferase activity; this is somewhat controversial. Makes several contacts with the 16S rRNA in the 70S ribosome. This chain is Large ribosomal subunit protein uL2, found in Enterococcus faecalis (strain ATCC 700802 / V583).